Consider the following 248-residue polypeptide: Regulator of G-protein signaling 7-binding protein A (248 aa).

Positions 1–32 (MSSAPNGRKNRPRTAGTIFQIGGKAPSRESER) are disordered. Residues Cys-243 and Cys-244 are each lipidated (S-palmitoyl cysteine).

It belongs to the RGS7BP/RGS9BP family. In terms of processing, palmitoylated. Undergoes rapid palmitoylation turnover. Palmitoylation regulates the cell membrane and nuclear shuttling and the regulation of GPCR signaling. Upon depalmitoylation, it is targeted from the plasma membrane into the nucleus. GPCR signaling inhibits depalmitoylation and promotes localization to the plasma membrane.

It is found in the nucleus. It localises to the cytoplasm. The protein localises to the cell membrane. Functionally, regulator of G protein-coupled receptor (GPCR) signaling. Regulatory subunit of the R7-Gbeta5 complexes that acts by controlling the subcellular location of the R7-Gbeta5 complexes. When palmitoylated, it targets the R7-Gbeta5 complexes to the plasma membrane, leading to inhibit G protein alpha subunits. When it is unpalmitoylated, the R7-Gbeta5 complexes undergo a nuclear/cytoplasmic shuttling. This Danio rerio (Zebrafish) protein is Regulator of G-protein signaling 7-binding protein A (rgs7bpa).